Consider the following 529-residue polypeptide: Membrane-bound lytic murein transglycosylase F (529 aa).

Positions 1-27 are cleaved as a signal peptide; sequence MPIFNLHQLRNFLFIIATTLFLSACQI. Residues 28–287 are non-LT domain; the sequence is ESKPTSELDQ…RLEEKYIGHI (260 aa). Residues 288–529 are LT domain; that stretch reads GSFDYVDTRA…QATLTTEVQP (242 aa). Residue Glu332 is part of the active site. A disordered region spans residues 510–529; sequence EALSPDVGVSQATLTTEVQP. Polar residues predominate over residues 519–529; the sequence is SQATLTTEVQP.

The protein in the N-terminal section; belongs to the bacterial solute-binding protein 3 family. In the C-terminal section; belongs to the transglycosylase Slt family.

The protein localises to the cell outer membrane. It catalyses the reaction Exolytic cleavage of the (1-&gt;4)-beta-glycosidic linkage between N-acetylmuramic acid (MurNAc) and N-acetylglucosamine (GlcNAc) residues in peptidoglycan, from either the reducing or the non-reducing ends of the peptidoglycan chains, with concomitant formation of a 1,6-anhydrobond in the MurNAc residue.. In terms of biological role, murein-degrading enzyme that degrades murein glycan strands and insoluble, high-molecular weight murein sacculi, with the concomitant formation of a 1,6-anhydromuramoyl product. Lytic transglycosylases (LTs) play an integral role in the metabolism of the peptidoglycan (PG) sacculus. Their lytic action creates space within the PG sacculus to allow for its expansion as well as for the insertion of various structures such as secretion systems and flagella. The sequence is that of Membrane-bound lytic murein transglycosylase F from Vibrio vulnificus (strain CMCP6).